The chain runs to 240 residues: Ribosomal RNA small subunit methyltransferase G (240 aa).

S-adenosyl-L-methionine is bound by residues glycine 79, 130 to 131, and arginine 149; that span reads AE.

Belongs to the methyltransferase superfamily. RNA methyltransferase RsmG family.

Its subcellular location is the cytoplasm. Functionally, specifically methylates the N7 position of a guanine in 16S rRNA. The protein is Ribosomal RNA small subunit methyltransferase G of Moorella thermoacetica (strain ATCC 39073 / JCM 9320).